Reading from the N-terminus, the 629-residue chain is tRNA uridine 5-carboxymethylaminomethyl modification enzyme MnmG (629 aa).

Residues 13–18, Val125, and Ser180 each bind FAD; that span reads GGGHAG. NAD(+) is bound at residue 273-287; that stretch reads GPRYCPSIEDKVMRF. FAD is bound at residue Gln370.

Belongs to the MnmG family. In terms of assembly, homodimer. Heterotetramer of two MnmE and two MnmG subunits. FAD is required as a cofactor.

It is found in the cytoplasm. NAD-binding protein involved in the addition of a carboxymethylaminomethyl (cmnm) group at the wobble position (U34) of certain tRNAs, forming tRNA-cmnm(5)s(2)U34. The sequence is that of tRNA uridine 5-carboxymethylaminomethyl modification enzyme MnmG from Escherichia coli O139:H28 (strain E24377A / ETEC).